The sequence spans 1153 residues: PPi-type phosphoenolpyruvate carboxykinase 2 (1153 aa).

Residues 1085 to 1131 (RQKLEVAKLNKDLAYLNKTIAEKPRLVETLNKQIAAVKEELQYVSSE) are a coiled coil.

The protein belongs to the PPi-type phosphoenolpyruvate carboxykinase family. In terms of assembly, monomer and trimer; forms heterotrimers with PEPCK1 and PEPCK3.

It is found in the cytoplasm. It localises to the cytosol. It carries out the reaction oxaloacetate + diphosphate = phosphoenolpyruvate + phosphate + CO2. Inorganic pyrophosphate (PPi)-dependent phosphoenolpyruvate carboxykinase, which regulates the carbon flow of the central metabolism by fixing CO(2) to phosphoenolpyruvate to produce oxaloacetate. Can also produce pyruvate and diphosphate from phosphoenolpyruvate and phosphate. This chain is PPi-type phosphoenolpyruvate carboxykinase 2, found in Entamoeba histolytica (strain ATCC 30459 / HM-1:IMSS / ABRM).